Consider the following 556-residue polypeptide: 2-succinyl-5-enolpyruvyl-6-hydroxy-3-cyclohexene-1-carboxylate synthase (556 aa).

Belongs to the TPP enzyme family. MenD subfamily. As to quaternary structure, homodimer. It depends on Mg(2+) as a cofactor. Mn(2+) serves as cofactor. Thiamine diphosphate is required as a cofactor.

The enzyme catalyses isochorismate + 2-oxoglutarate + H(+) = 5-enolpyruvoyl-6-hydroxy-2-succinyl-cyclohex-3-ene-1-carboxylate + CO2. The protein operates within quinol/quinone metabolism; 1,4-dihydroxy-2-naphthoate biosynthesis; 1,4-dihydroxy-2-naphthoate from chorismate: step 2/7. It participates in quinol/quinone metabolism; menaquinone biosynthesis. Its function is as follows. Catalyzes the thiamine diphosphate-dependent decarboxylation of 2-oxoglutarate and the subsequent addition of the resulting succinic semialdehyde-thiamine pyrophosphate anion to isochorismate to yield 2-succinyl-5-enolpyruvyl-6-hydroxy-3-cyclohexene-1-carboxylate (SEPHCHC). This chain is 2-succinyl-5-enolpyruvyl-6-hydroxy-3-cyclohexene-1-carboxylate synthase, found in Escherichia coli (strain UTI89 / UPEC).